Consider the following 187-residue polypeptide: Peptidyl-tRNA hydrolase (187 aa).

A tRNA-binding site is contributed by Tyr-15. His-20 serves as the catalytic Proton acceptor. Positions 64, 66, and 112 each coordinate tRNA.

Belongs to the PTH family. As to quaternary structure, monomer.

The protein localises to the cytoplasm. The enzyme catalyses an N-acyl-L-alpha-aminoacyl-tRNA + H2O = an N-acyl-L-amino acid + a tRNA + H(+). In terms of biological role, hydrolyzes ribosome-free peptidyl-tRNAs (with 1 or more amino acids incorporated), which drop off the ribosome during protein synthesis, or as a result of ribosome stalling. Its function is as follows. Catalyzes the release of premature peptidyl moieties from peptidyl-tRNA molecules trapped in stalled 50S ribosomal subunits, and thus maintains levels of free tRNAs and 50S ribosomes. The sequence is that of Peptidyl-tRNA hydrolase from Bacteroides fragilis (strain ATCC 25285 / DSM 2151 / CCUG 4856 / JCM 11019 / LMG 10263 / NCTC 9343 / Onslow / VPI 2553 / EN-2).